The following is a 134-amino-acid chain: UPF0412 protein YaaI (134 aa).

A signal peptide spans 1–23 (MKSVFTISASLAISLMLCCTAQA).

Belongs to the UPF0412 family.

The protein is UPF0412 protein YaaI of Escherichia coli (strain ATCC 8739 / DSM 1576 / NBRC 3972 / NCIMB 8545 / WDCM 00012 / Crooks).